The primary structure comprises 654 residues: DNA ligase (654 aa).

Residues 37 to 41 (DEEYD), 86 to 87 (SM), and E113 each bind NAD(+). K115 serves as the catalytic N6-AMP-lysine intermediate. R136, E170, and K308 together coordinate NAD(+). 4 residues coordinate Zn(2+): C402, C405, C418, and C423. The BRCT domain maps to 576–654 (ITQNAFSGKS…GEFERLKLEI (79 aa)).

It belongs to the NAD-dependent DNA ligase family. LigA subfamily. Requires Mg(2+) as cofactor. The cofactor is Mn(2+).

The enzyme catalyses NAD(+) + (deoxyribonucleotide)n-3'-hydroxyl + 5'-phospho-(deoxyribonucleotide)m = (deoxyribonucleotide)n+m + AMP + beta-nicotinamide D-nucleotide.. In terms of biological role, DNA ligase that catalyzes the formation of phosphodiester linkages between 5'-phosphoryl and 3'-hydroxyl groups in double-stranded DNA using NAD as a coenzyme and as the energy source for the reaction. It is essential for DNA replication and repair of damaged DNA. The chain is DNA ligase from Campylobacter curvus (strain 525.92).